The following is a 199-amino-acid chain: dITP/XTP pyrophosphatase (199 aa).

8 to 13 is a binding site for substrate; the sequence is SGNAGK. The active-site Proton acceptor is D69. D69 contributes to the Mg(2+) binding site. Residues S70, 154 to 157, K177, and 182 to 183 each bind substrate; these read FGYN and HR.

It belongs to the HAM1 NTPase family. In terms of assembly, homodimer. The cofactor is Mg(2+).

The catalysed reaction is XTP + H2O = XMP + diphosphate + H(+). It catalyses the reaction dITP + H2O = dIMP + diphosphate + H(+). The enzyme catalyses ITP + H2O = IMP + diphosphate + H(+). In terms of biological role, pyrophosphatase that catalyzes the hydrolysis of nucleoside triphosphates to their monophosphate derivatives, with a high preference for the non-canonical purine nucleotides XTP (xanthosine triphosphate), dITP (deoxyinosine triphosphate) and ITP. Seems to function as a house-cleaning enzyme that removes non-canonical purine nucleotides from the nucleotide pool, thus preventing their incorporation into DNA/RNA and avoiding chromosomal lesions. This is dITP/XTP pyrophosphatase from Xanthomonas oryzae pv. oryzae (strain KACC10331 / KXO85).